We begin with the raw amino-acid sequence, 99 residues long: Microcin E492 (99 aa).

Residues 1–15 form the signal peptide; that stretch reads MREISQKDLNLAFGA. The tract at residues 80–99 is disordered; that stretch reads SWNGSGSGYNSATSSSGSGS. A compositionally biased stretch (low complexity) spans 87–99; sequence GYNSATSSSGSGS. Serine microcin E492 siderophore ester is present on Ser99.

The protein belongs to the class IIa microcin family. In terms of assembly, multimer. Possibly forms a homodimer or a homotrimer. The C-terminal Ser is modified by attachment to a siderophore similar to enterobactin, which can bind one atom of iron. The modification consists of an ester linkage of the serine carboxyl to O6 of a glucose which is linked by a C-glycosidic bond to the 5'-benzoyl of a linear triester of N-(2,3-dihydroxybenzoyl)serine. Presence of the siderophore ester increases the antibacterial activity of the protein.

Functionally, channel-forming bacteriocin. Forms cation-selective channels. Active on enterobacteria, with highest activity against E.coli. Not active on other Gram-negative bacteria, Gram-positive bacteria or fungi. The unmodified protein is active against E.coli and S.enteritidis. When the siderophore ester is present at Ser-99, antibacterial activity against these species is increased and activity is also detected against E.cloacae and K.pneumoniae. Neutralized by its immunity protein MceB. The polypeptide is Microcin E492 (Klebsiella pneumoniae).